The chain runs to 714 residues: Palmitoyltransferase ZDHHC5 (714 aa).

At 1–13 (MPAESAKRFKPSK) the chain is on the cytoplasmic side. Residues 14-34 (YVPVSAAAIFLVGATTLFFAF) form a helical membrane-spanning segment. At 35–52 (TCPGLSLSVSPAVPVYNA) the chain is on the extracellular side. Residues 53 to 73 (VVFLFVLANFSMATFMDPGVF) form a helical membrane-spanning segment. Topologically, residues 74 to 148 (PRAEEDEDKE…NCIGRRNYRY (75 aa)) are cytoplasmic. The residue at position 91 (tyrosine 91) is a Phosphotyrosine. In terms of domain architecture, DHHC spans 104-154 (KWCATCRFYRPPRCSHCSVCDNCVEEFDHHCPWVNNCIGRRNYRYFFLFLL). Cysteine 134 functions as the S-palmitoyl cysteine intermediate in the catalytic mechanism. The helical transmembrane segment at 149–169 (FFLFLLSLTAHITGVFGFGLL) threads the bilayer. Residues 170 to 191 (YVLYHMEELSGVRTAVTMAVMC) are Extracellular-facing. Residues 192–212 (VAGLFFIPVAGLTGFHVVLVA) form a helical membrane-spanning segment. Residues 213-714 (RGRTTNEQVT…VGGTTYEISV (502 aa)) lie on the Cytoplasmic side of the membrane. Residue serine 247 is modified to Phosphoserine. The interval 289 to 714 (GELRRTKSKG…VGGTTYEISV (426 aa)) is disordered. Residue threonine 294 is modified to Phosphothreonine. 2 positions are modified to phosphoserine: serine 296 and serine 299. Threonine 303 is subject to Phosphothreonine. Serine 345 is modified (phosphoserine). Residues threonine 348 and threonine 350 each carry the phosphothreonine modification. The segment covering 359 to 373 (SSSSASAAMPHSSSA) has biased composition (low complexity). Phosphoserine occurs at positions 380, 398, 406, and 409. Positions 388 to 398 (AESSRQPSYRS) are enriched in polar residues. At threonine 411 the chain carries Phosphothreonine. Residues 422 to 432 (SSGSRSSSLKS) are compositionally biased toward low complexity. 3 positions are modified to phosphoserine: serine 425, serine 429, and serine 432. Position 436 is a phosphothreonine (threonine 436). A compositionally biased stretch (polar residues) spans 445-478 (SIRSEGTTSTSYKSLANQTRNGSLSYDSLLTPSD). Residues serine 529 and serine 554 each carry the phosphoserine modification. The residue at position 616 (arginine 616) is an Omega-N-methylarginine. Serine 620 is subject to Phosphoserine. Threonine 658 carries the post-translational modification Phosphothreonine. Polar residues predominate over residues 667 to 678 (TAYSKSNGQPKS). Pro residues predominate over residues 683–692 (PPGPGQPPLS). Serine 693 carries the post-translational modification Phosphoserine. Arginine 696 bears the Omega-N-methylarginine mark.

Belongs to the DHHC palmitoyltransferase family. ERF2/ZDHHC9 subfamily. Post-translationally, phosphorylation regulates association with endocytic proteins and its subcellular localization. Phosphorylation by LYN during fatty acid uptake leads to inactivation of the activity. In terms of processing, autopalmitoylated. Palmitoylation of the C-terminal tail regulates stimulation-dependent plasma membrane motility.

It is found in the cell membrane. It carries out the reaction L-cysteinyl-[protein] + hexadecanoyl-CoA = S-hexadecanoyl-L-cysteinyl-[protein] + CoA. Palmitoyltransferase that catalyzes the addition of palmitate onto various protein substrates such as CTNND2, CD36, GSDMD, NLRP3, NOD1, NOD2, STAT3 and S1PR1 thus plays a role in various biological processes including cell adhesion, inflammation, fatty acid uptake, bacterial sensing or cardiac functions. Plays an important role in the regulation of synapse efficacy by mediating palmitoylation of delta-catenin/CTNND2, thereby increasing synaptic delivery and surface stabilization of alpha-amino-3-hydroxy-5-methyl-4-isoxazole propionic acid receptors (AMPARs). Under basal conditions, remains at the synaptic membrane through FYN-mediated phosphorylation that prevents association with endocytic proteins. Neuronal activity enhances the internalization and trafficking of DHHC5 from spines to dendritic shafts where it palmitoylates delta-catenin/CTNND2. Regulates cell adhesion at the plasma membrane by palmitoylating GOLGA7B and DSG2. Plays a role in innate immune response by mediating the palmitoylation of NOD1 and NOD2 and their proper recruitment to the bacterial entry site and phagosomes. Also participates in fatty acid uptake by palmitoylating CD36 and thereby targeting it to the plasma membrane. Upon binding of fatty acids to CD36, gets phosphorylated by LYN leading to inactivation and subsequent CD36 caveolar endocytosis. Controls oligodendrocyte development by catalyzing STAT3 palmitoylation. Acts as a regulator of inflammatory response by mediating palmitoylation of NLRP3 and GSDMD. Palmitoylates NLRP3 to promote inflammasome assembly and activation. Activates pyroptosis by catalyzing palmitoylation of gasdermin-D (GSDMD), thereby promoting membrane translocation and pore formation of GSDMD. The sequence is that of Palmitoyltransferase ZDHHC5 (ZDHHC5) from Bos taurus (Bovine).